The chain runs to 445 residues: Gamma-glutamyl phosphate reductase (445 aa).

This sequence belongs to the gamma-glutamyl phosphate reductase family.

The protein resides in the cytoplasm. The enzyme catalyses L-glutamate 5-semialdehyde + phosphate + NADP(+) = L-glutamyl 5-phosphate + NADPH + H(+). Its pathway is amino-acid biosynthesis; L-proline biosynthesis; L-glutamate 5-semialdehyde from L-glutamate: step 2/2. Catalyzes the NADPH-dependent reduction of L-glutamate 5-phosphate into L-glutamate 5-semialdehyde and phosphate. The product spontaneously undergoes cyclization to form 1-pyrroline-5-carboxylate. This chain is Gamma-glutamyl phosphate reductase, found in Persephonella marina (strain DSM 14350 / EX-H1).